The following is a 553-amino-acid chain: Mothers against decapentaplegic homolog 4 (553 aa).

The tract at residues 1 to 323 is mediates interaction with ZBTB7A; the sequence is MDNMSITNTP…PISNHPAPEY (323 aa). The MH1 domain maps to 18–142; that stretch reads SIVHSLMCHR…YERVVSPGID (125 aa). Position 37 is an N6-acetyllysine (Lys37). Positions 44–69 are required for interaction with TSC22D1; that stretch reads VKKLKEKKDELDSLITAITTNGAHPS. Residue Cys71 coordinates Zn(2+). Lys113 participates in a covalent cross-link: Glycyl lysine isopeptide (Lys-Gly) (interchain with G-Cter in SUMO2). Cys115, Cys127, and His132 together coordinate Zn(2+). The interval 168–194 is disordered; that stretch reads GQPSLSTEGHSIQTIQHPPSNRASTET. The span at 170–194 shows a compositional bias: polar residues; the sequence is PSLSTEGHSIQTIQHPPSNRASTET. Residues 275–321 are SAD; sequence PYTPNLPHHQNGHLQHHPPMPPHPGHYWPPVHNELAFQPPISNHPAP. One can recognise an MH2 domain in the interval 324–553; it reads WCSIAYFEMD…MPIADPQPLD (230 aa). N6-acetyllysine occurs at positions 429 and 508. Lys520 participates in a covalent cross-link: Glycyl lysine isopeptide (Lys-Gly) (interchain with G-Cter in ubiquitin).

Belongs to the dwarfin/SMAD family. As to quaternary structure, monomer; in the absence of TGF-beta activation. Heterotrimer; on TGF-beta activation. Heterotrimer composed of two molecules of a C-terminally phosphorylated R-SMAD molecule, SMAD2 or SMAD3, and one molecule of SMAD4 to form the transcriptional active SMAD2/SMAD3-SMAD4 complex. Found in a ternary complex composed of SMAD4, STK11/LKB1 and STK11IP. Found in a complex with SMAD1 and YY1. Identified in a complex that contains at least ZNF451, SMAD2, SMAD3 and SMAD4. Interacts with ATF2, COPS5, DACH1, MSG1, SKI, STK11/LKB1, STK11IP and TRIM33. Associates with ZNF423 or ZNF521 in response to BMP2 leading to activate transcription of BMP target genes. Interacts with USP9X. Interacts with RBPMS. Interacts with WWTR1 (via coiled-coil domain). Interacts with CITED1 and CITED2. Interacts with PDPK1 (via PH domain). Interacts with VPS39; this interaction affects heterodimer formation with SMAD3, but not with SMAD2, and leads to inhibition of SMAD3-dependent transcription activation. Interactions with VPS39 and SMAD2 may be mutually exclusive. Interacts (via MH2 domain) with ZNF451 (via N-terminal zinc-finger domains). Interacts with ZC3H3. Interacts weakly with ZNF8. Interacts with NUP93 and IPO7; translocates SMAD4 to the nucleus through the NPC upon BMP7 stimulation resulting in activation of SMAD4 signaling. Interacts with CREB3L1, the interaction takes place upon TGFB1 induction and SMAD4 acts as a CREB3L1 coactivator to induce the expression of genes involved in the assembly of collagen extracellular matrix. Interacts with DLX1. Interacts with ZBTB7A; the interaction is direct and stimulated by TGFB1. Interacts with CREBBP; the recruitment of this transcriptional coactivator is negatively regulated by ZBTB7A. Interacts with EP300; the interaction with this transcriptional coactivator is negatively regulated by ZBTB7A. Interacts with HDAC1. Interacts (via MH2 domain) with ZMIZ1 (via SP-RING-type domain); in the TGF-beta signaling pathway increases the activity of the SMAD3/SMAD4 transcriptional complex. Interacts (via N-terminus) with TSC22D1. In terms of processing, monoubiquitinated on Lys-520 by E3 ubiquitin-protein ligase TRIM33. Monoubiquitination hampers its ability to form a stable complex with activated SMAD2/3 resulting in inhibition of TGF-beta/BMP signaling cascade. Post-translationally, phosphorylated by PDPK1.

The protein localises to the cytoplasm. It is found in the nucleus. In terms of biological role, common SMAD (co-SMAD) is the coactivator and mediator of signal transduction by TGF-beta (transforming growth factor). Component of the heterotrimeric SMAD2/SMAD3-SMAD4 complex that forms in the nucleus and is required for the TGF-mediated signaling. Promotes binding of the SMAD2/SMAD4/FAST-1 complex to DNA and provides an activation function required for SMAD1 or SMAD2 to stimulate transcription. Component of the multimeric SMAD3/SMAD4/JUN/FOS complex which forms at the AP1 promoter site; required for synergistic transcriptional activity in response to TGF-beta. Acts synergistically with SMAD1 and YY1 in bone morphogenetic protein (BMP)-mediated cardiac-specific gene expression. Binds to SMAD binding elements (SBEs) (5'-GTCT/AGAC-3') within BMP response element (BMPRE) of cardiac activating regions. May act as a tumor suppressor. Positively regulates PDPK1 kinase activity by stimulating its dissociation from the 14-3-3 protein YWHAQ which acts as a negative regulator. In muscle physiology, plays a central role in the balance between atrophy and hypertrophy. When recruited by MSTN, promotes atrophy response via phosphorylated SMAD2/4. MSTN decrease causes SMAD4 release and subsequent recruitment by the BMP pathway to promote hypertrophy via phosphorylated SMAD1/5/8. The sequence is that of Mothers against decapentaplegic homolog 4 (SMAD4) from Bos taurus (Bovine).